A 120-amino-acid polypeptide reads, in one-letter code: NAD(P)H-quinone oxidoreductase subunit 3 (120 aa).

A run of 3 helical transmembrane segments spans residues 11–31 (LIFL…SYLI), 64–84 (MFAL…PWAV), and 89–109 (LGLL…VALV).

This sequence belongs to the complex I subunit 3 family. NDH-1 can be composed of about 15 different subunits; different subcomplexes with different compositions have been identified which probably have different functions.

Its subcellular location is the cell inner membrane. The catalysed reaction is a plastoquinone + NADH + (n+1) H(+)(in) = a plastoquinol + NAD(+) + n H(+)(out). The enzyme catalyses a plastoquinone + NADPH + (n+1) H(+)(in) = a plastoquinol + NADP(+) + n H(+)(out). NDH-1 shuttles electrons from an unknown electron donor, via FMN and iron-sulfur (Fe-S) centers, to quinones in the respiratory and/or the photosynthetic chain. The immediate electron acceptor for the enzyme in this species is believed to be plastoquinone. Couples the redox reaction to proton translocation, and thus conserves the redox energy in a proton gradient. Cyanobacterial NDH-1 also plays a role in inorganic carbon-concentration. This Gloeobacter violaceus (strain ATCC 29082 / PCC 7421) protein is NAD(P)H-quinone oxidoreductase subunit 3.